Consider the following 613-residue polypeptide: Activating transcription factor 3 (613 aa).

Disordered stretches follow at residues 77–115 and 133–218; these read RHFN…PSVQ and KRKL…NKIA. Residues 85 to 105 are compositionally biased toward low complexity; the sequence is GQSHSQDSSHSSCSGSPLDSP. The segment covering 138–147 has biased composition (polar residues); that stretch reads TCDSSSGSEQ. The span at 158–175 shows a compositional bias: low complexity; sequence NHNGHSGSSNNYSGSMSN. The segment covering 178 to 191 has biased composition (acidic residues); the sequence is DLDDDCEESSDDDS. In terms of domain architecture, bZIP spans 205 to 268; the sequence is EDRRRRRRER…QKLVDMLKSH (64 aa). The segment at 207–229 is basic motif; the sequence is RRRRRRERNKIAATKCRMKKRER. A leucine-zipper region spans residues 233-261; it reads LIKESEVLDTQNVELKNQVRQLETERQKL. The tract at residues 337 to 446 is disordered; sequence PNGYCKPSPS…SSNATSSTTP (110 aa). The span at 356-368 shows a compositional bias: low complexity; it reads QQQQQQQQQQQPQ. The span at 369-389 shows a compositional bias: polar residues; the sequence is SLNPAGNNVIDQQHANPSPSL. The segment covering 402–446 has biased composition (low complexity); it reads GSASNHPSHNNNNNNNNSSGASSNTSNNNSNISSHSSNATSSTTP.

This sequence belongs to the bZIP family. ATF subfamily. Interacts with Jra/jun; the interaction enhances the DNA-binding activity of Atf3. As to expression, moderate expression in some regions of the larval nervous system, the ring gland and imaginal disks. High expression in larval gut, excretory malpighian tubules, salivary glands, and, to a lesser extent, the fat body where levels are approximately 2.5-fold less than the gut.

Its subcellular location is the nucleus. Transcription factor which binds to the cAMP response element (CRE). Regulates metabolic and innate immune homeostasis, possibly by controlling appropriate expression of genes involved in peritrophic matrix composition and ensuring the normal digestive and immune function of the gut. Required for the expression of odorant receptors Or43b and Or47b. In Drosophila melanogaster (Fruit fly), this protein is Activating transcription factor 3.